Reading from the N-terminus, the 493-residue chain is Glutamyl-tRNA(Gln) amidotransferase subunit A (493 aa).

Catalysis depends on charge relay system residues Lys81 and Ser156. The Acyl-ester intermediate role is filled by Ser180.

It belongs to the amidase family. GatA subfamily. As to quaternary structure, heterotrimer of A, B and C subunits.

It carries out the reaction L-glutamyl-tRNA(Gln) + L-glutamine + ATP + H2O = L-glutaminyl-tRNA(Gln) + L-glutamate + ADP + phosphate + H(+). Its function is as follows. Allows the formation of correctly charged Gln-tRNA(Gln) through the transamidation of misacylated Glu-tRNA(Gln) in organisms which lack glutaminyl-tRNA synthetase. The reaction takes place in the presence of glutamine and ATP through an activated gamma-phospho-Glu-tRNA(Gln). The polypeptide is Glutamyl-tRNA(Gln) amidotransferase subunit A (Mycobacterium avium (strain 104)).